A 398-amino-acid polypeptide reads, in one-letter code: Acetate kinase (398 aa).

Mg(2+) is bound at residue asparagine 9. Lysine 16 contributes to the ATP binding site. Arginine 90 lines the substrate pocket. Aspartate 147 functions as the Proton donor/acceptor in the catalytic mechanism. ATP is bound by residues histidine 207–glycine 211, aspartate 282–arginine 284, and glycine 330–asparagine 334. Glutamate 384 is a binding site for Mg(2+).

The protein belongs to the acetokinase family. Homodimer. Requires Mg(2+) as cofactor. The cofactor is Mn(2+).

The protein resides in the cytoplasm. It catalyses the reaction acetate + ATP = acetyl phosphate + ADP. The protein operates within metabolic intermediate biosynthesis; acetyl-CoA biosynthesis; acetyl-CoA from acetate: step 1/2. Catalyzes the formation of acetyl phosphate from acetate and ATP. Can also catalyze the reverse reaction. The sequence is that of Acetate kinase from Staphylococcus haemolyticus (strain JCSC1435).